Consider the following 200-residue polypeptide: dITP/XTP pyrophosphatase (200 aa).

Thr8–Lys13 is a substrate binding site. Asp72 acts as the Proton acceptor in catalysis. Mg(2+) is bound at residue Asp72. Substrate contacts are provided by residues Ser73, Phe155–Asp158, Lys178, and His183–Arg184.

Belongs to the HAM1 NTPase family. In terms of assembly, homodimer. It depends on Mg(2+) as a cofactor.

The catalysed reaction is XTP + H2O = XMP + diphosphate + H(+). It carries out the reaction dITP + H2O = dIMP + diphosphate + H(+). The enzyme catalyses ITP + H2O = IMP + diphosphate + H(+). Functionally, pyrophosphatase that catalyzes the hydrolysis of nucleoside triphosphates to their monophosphate derivatives, with a high preference for the non-canonical purine nucleotides XTP (xanthosine triphosphate), dITP (deoxyinosine triphosphate) and ITP. Seems to function as a house-cleaning enzyme that removes non-canonical purine nucleotides from the nucleotide pool, thus preventing their incorporation into DNA/RNA and avoiding chromosomal lesions. The chain is dITP/XTP pyrophosphatase from Streptomyces coelicolor (strain ATCC BAA-471 / A3(2) / M145).